The primary structure comprises 206 residues: Small ribosomal subunit protein uS4 (206 aa).

An S4 RNA-binding domain is found at 96-159; it reads SRLDNVVYRM…KKQARIVEGL (64 aa).

The protein belongs to the universal ribosomal protein uS4 family. In terms of assembly, part of the 30S ribosomal subunit. Contacts protein S5. The interaction surface between S4 and S5 is involved in control of translational fidelity.

In terms of biological role, one of the primary rRNA binding proteins, it binds directly to 16S rRNA where it nucleates assembly of the body of the 30S subunit. Functionally, with S5 and S12 plays an important role in translational accuracy. This chain is Small ribosomal subunit protein uS4, found in Chromobacterium violaceum (strain ATCC 12472 / DSM 30191 / JCM 1249 / CCUG 213 / NBRC 12614 / NCIMB 9131 / NCTC 9757 / MK).